Consider the following 332-residue polypeptide: Leucine carboxyl methyltransferase 1 homolog (332 aa).

S-adenosyl-L-methionine contacts are provided by residues K22, R57, G83, D107, 153 to 154 (DL), and E180.

Belongs to the methyltransferase superfamily. LCMT family.

It is found in the cytoplasm. The protein resides in the membrane. It catalyses the reaction [phosphatase 2A protein]-C-terminal L-leucine + S-adenosyl-L-methionine = [phosphatase 2A protein]-C-terminal L-leucine methyl ester + S-adenosyl-L-homocysteine. In terms of biological role, methylates the carboxyl group of the C-terminal leucine residue of protein phosphatase 2A (PP2A) catalytic subunits to form alpha-leucine ester residues. Involved in brassinosteroid (BR) signaling. Plays a negative role in BR signaling pathway. Functions as a positive regulator of BRI1 receptor-kinase degradation. Methylates PP2A, thus facilitating its association with activated BRI1. This leads to receptor dephosphorylation and degradation, and thus to the termination of BR signaling. May act upstream of ASK7/BIN2. Involved in methylation of PP2A during environmental stress responses. In Arabidopsis thaliana (Mouse-ear cress), this protein is Leucine carboxyl methyltransferase 1 homolog.